The chain runs to 267 residues: MFKLDLQPTEKLFIPFITAGDPVPEVSIELAKSLQKAGATALELGVAYSDPLADGPVIQRASKRALDQGMNIVKAIELGGEMKKNGVNIPIILFTYYNPVLQLNKEYFFALLQENHIDGLLVPDLPLEESNSLQEECKSHEVTYISLVAPTSESRLKTIIEQAEGFVYCVSSLGVTGVRNEFNSSVYPFIRTVKNLSTVPVAVGFGISNREQVIKMNEISDGVVVGSALVRKIEELKDRLISAETRNQALQEFEDYAMAFSGLYSLK.

Residues E43 and D54 each act as proton acceptor in the active site.

The protein belongs to the TrpA family. Tetramer of two alpha and two beta chains.

It catalyses the reaction (1S,2R)-1-C-(indol-3-yl)glycerol 3-phosphate + L-serine = D-glyceraldehyde 3-phosphate + L-tryptophan + H2O. Its pathway is amino-acid biosynthesis; L-tryptophan biosynthesis; L-tryptophan from chorismate: step 5/5. Functionally, the alpha subunit is responsible for the aldol cleavage of indoleglycerol phosphate to indole and glyceraldehyde 3-phosphate. The sequence is that of Tryptophan synthase alpha chain from Bacillus subtilis subsp. natto.